A 502-amino-acid chain; its full sequence is UDP-N-acetylmuramate--L-alanine ligase (502 aa).

120-126 contributes to the ATP binding site; the sequence is GTHGKTS.

The protein belongs to the MurCDEF family.

Its subcellular location is the cytoplasm. It catalyses the reaction UDP-N-acetyl-alpha-D-muramate + L-alanine + ATP = UDP-N-acetyl-alpha-D-muramoyl-L-alanine + ADP + phosphate + H(+). It participates in cell wall biogenesis; peptidoglycan biosynthesis. Functionally, cell wall formation. The protein is UDP-N-acetylmuramate--L-alanine ligase of Rhodococcus erythropolis (strain PR4 / NBRC 100887).